Here is a 144-residue protein sequence, read N- to C-terminus: uncharacterized protein (144 aa).

The first 23 residues, 1-23 (MRKILLFATVIGFLIMVSGTLSY), serve as a signal peptide directing secretion.

This is an uncharacterized protein from Archaeoglobus fulgidus (strain ATCC 49558 / DSM 4304 / JCM 9628 / NBRC 100126 / VC-16).